Here is a 398-residue protein sequence, read N- to C-terminus: Mu-type opioid receptor (398 aa).

The Extracellular portion of the chain corresponds to 1-66; it reads MDSSAGPGNI…CPQTGSPSMV (66 aa). Asn-9, Asn-31, Asn-38, and Asn-46 each carry an N-linked (GlcNAc...) asparagine glycan. The helical transmembrane segment at 67-91 threads the bilayer; that stretch reads TAITIMALYSIVCVVGLFGNFLVMY. Topologically, residues 92 to 104 are cytoplasmic; sequence VIVRYTKMKTATN. The chain crosses the membrane as a helical span at residues 105–129; the sequence is IYIFNLALADALATSTLPFQSVNYL. Residues 130-140 are Extracellular-facing; sequence MGTWPFGNILC. A disulfide bridge connects residues Cys-140 and Cys-217. A helical membrane pass occupies residues 141 to 163; that stretch reads KIVISIDYYNMFTSIFTLCTMSV. The Cytoplasmic segment spans residues 164-183; that stretch reads DRYIAVCHPVKALDFRTPRN. The residue at position 166 (Tyr-166) is a Phosphotyrosine. A helical transmembrane segment spans residues 184–205; sequence AKIVNVCNWILSSAIGLPVMFM. Residues 206–228 are Extracellular-facing; the sequence is ATTKYRQGSIDCTLTFSHPTWYW. A helical membrane pass occupies residues 229-253; sequence ENLLKICVFIFAFIMPVLIITVCYG. Residues 254 to 277 are Cytoplasmic-facing; that stretch reads LMILRLKSVRMLSGSKEKDRNLRR. A helical membrane pass occupies residues 278-304; that stretch reads ITRMVLVVVAVFIVCWTPIHIYVIIKA. Over 305–312 the chain is Extracellular; the sequence is LITIPETT. A helical membrane pass occupies residues 313-336; sequence FQTVSWHFCIALGYTNSCLNPVLY. Residues 332–336 carry the NPxxY; plays a role in stabilizing the activated conformation of the receptor motif; the sequence is NPVLY. Residues 337–398 lie on the Cytoplasmic side of the membrane; the sequence is AFLDENFKRC…NLEAETAPLP (62 aa). Residue Cys-351 is the site of S-palmitoyl cysteine attachment. Residues 362–383 form a disordered region; sequence NSARIRQNTREHPSTANTVDRT. Ser-363 carries the post-translational modification Phosphoserine. Thr-370 carries the post-translational modification Phosphothreonine. Position 375 is a phosphoserine (Ser-375). Thr-394 carries the post-translational modification Phosphothreonine.

Belongs to the G-protein coupled receptor 1 family. Forms homooligomers and heterooligomers with other GPCRs, such as OPRD1, OPRK1, OPRL1, NPFFR2, ADRA2A, SSTR2, CNR1 and CCR5 (probably in dimeric forms). Interacts with heterotrimeric G proteins; interaction with a heterotrimeric complex containing GNAI1, GNB1 and GNG2 stabilizes the active conformation of the receptor and increases its affinity for endomorphin-2, the synthetic opioid peptide DAMGO and for morphinan agonists. Interacts with PPL; the interaction disrupts agonist-mediated G-protein activation. Interacts (via C-terminus) with DNAJB4 (via C-terminus). Interacts with calmodulin; the interaction inhibits the constitutive activity of OPRM1; it abolishes basal and attenuates agonist-stimulated G-protein coupling. Interacts with FLNA, PLD2, RANBP9 and WLS and GPM6A. Interacts with RTP4. Interacts with SYP and GNAS. Interacts with RGS9, RGS17, RGS20, RGS4, PPP1R9B and HINT1. Isoform 9 interacts with GRPR. Post-translationally, phosphorylated. Differentially phosphorylated in basal and agonist-induced conditions. Agonist-mediated phosphorylation modulates receptor internalization. Phosphorylated by GRK2 in a agonist-dependent manner. Phosphorylation at Tyr-166 requires receptor activation, is dependent on non-receptor protein tyrosine kinase Src and results in a decrease in agonist efficacy by reducing G-protein coupling efficiency. Phosphorylated on tyrosine residues; the phosphorylation is involved in agonist-induced G-protein-independent receptor down-regulation. Phosphorylation at Ser-375 is involved in G-protein-dependent but not beta-arrestin-dependent activation of the ERK pathway. In terms of processing, ubiquitinated. A basal ubiquitination seems not to be related to degradation. Ubiquitination is increased upon formation of OPRM1:OPRD1 oligomers leading to proteasomal degradation; the ubiquitination is diminished by RTP4.

It is found in the cell membrane. The protein localises to the cell projection. Its subcellular location is the axon. The protein resides in the perikaryon. It localises to the dendrite. It is found in the endosome. Its function is as follows. Receptor for endogenous opioids such as beta-endorphin and endomorphin. Receptor for natural and synthetic opioids including morphine, heroin, DAMGO, fentanyl, etorphine, buprenorphin and methadone. Also activated by enkephalin peptides, such as Met-enkephalin or Met-enkephalin-Arg-Phe, with higher affinity for Met-enkephalin-Arg-Phe. Agonist binding to the receptor induces coupling to an inactive GDP-bound heterotrimeric G-protein complex and subsequent exchange of GDP for GTP in the G-protein alpha subunit leading to dissociation of the G-protein complex with the free GTP-bound G-protein alpha and the G-protein beta-gamma dimer activating downstream cellular effectors. The agonist- and cell type-specific activity is predominantly coupled to pertussis toxin-sensitive G(i) and G(o) G alpha proteins, GNAI1, GNAI2, GNAI3 and GNAO1 isoforms Alpha-1 and Alpha-2, and to a lesser extent to pertussis toxin-insensitive G alpha proteins GNAZ and GNA15. They mediate an array of downstream cellular responses, including inhibition of adenylate cyclase activity and both N-type and L-type calcium channels, activation of inward rectifying potassium channels, mitogen-activated protein kinase (MAPK), phospholipase C (PLC), phosphoinositide/protein kinase (PKC), phosphoinositide 3-kinase (PI3K) and regulation of NF-kappa-B. Also couples to adenylate cyclase stimulatory G alpha proteins. The selective temporal coupling to G-proteins and subsequent signaling can be regulated by RGSZ proteins, such as RGS9, RGS17 and RGS4. Phosphorylation by members of the GPRK subfamily of Ser/Thr protein kinases and association with beta-arrestins is involved in short-term receptor desensitization. Beta-arrestins associate with the GPRK-phosphorylated receptor and uncouple it from the G-protein thus terminating signal transduction. The phosphorylated receptor is internalized through endocytosis via clathrin-coated pits which involves beta-arrestins. The activation of the ERK pathway occurs either in a G-protein-dependent or a beta-arrestin-dependent manner and is regulated by agonist-specific receptor phosphorylation. Acts as a class A G-protein coupled receptor (GPCR) which dissociates from beta-arrestin at or near the plasma membrane and undergoes rapid recycling. Receptor down-regulation pathways are varying with the agonist and occur dependent or independent of G-protein coupling. Endogenous ligands induce rapid desensitization, endocytosis and recycling. Heterooligomerization with other GPCRs can modulate agonist binding, signaling and trafficking properties. Isoform 9 is involved in morphine-induced scratching and seems to cross-activate GRPR in response to morphine. This chain is Mu-type opioid receptor (Oprm1), found in Mus musculus (Mouse).